Reading from the N-terminus, the 839-residue chain is Amyloid-beta A4 precursor protein-binding family A member 1 (839 aa).

3 disordered regions span residues 1-118 (MNHL…DESA), 235-346 (RLHH…EKRD), and 362-437 (VKTR…ESRK). Residues 23–38 (ESVEADLEHPEVEEEQ) show a composition bias toward acidic residues. Ser79 is subject to Phosphoserine. 2 stretches are compositionally biased toward basic and acidic residues: residues 103-112 (DGYEAERAQD) and 237-255 (HHYD…KEAE). The tract at residues 227–315 (YRQEALGARL…TPGGGHPDSP (89 aa)) is munc-18-1 binding. A phosphoserine mark is found at Ser243, Ser247, Ser249, Ser264, Ser281, and Ser286. Phosphothreonine is present on Thr306. Phosphoserine occurs at positions 314 and 369. The residue at position 372 (Thr372) is a Phosphothreonine. The LIN-2/CASK binding stretch occupies residues 375–438 (EPKEPIWVMR…ASTNKESRKS (64 aa)). Residues 389–400 (PTRDCDDQRPVD) show a composition bias toward basic and acidic residues. Low complexity predominate over residues 401–417 (GDSPSPGSSSPLGAESS). Ser403, Ser405, Ser410, and Ser570 each carry phosphoserine. The 187-residue stretch at 459–645 (DGIIFAANYL…LLNTQDMYND (187 aa)) folds into the PID domain. The autoinhibitory helix linker stretch occupies residues 628–643 (LSQKEYSDLLNTQDMY). 2 consecutive PDZ domains span residues 658–744 (DVFI…IVRC) and 749–824 (TVLI…TMPA).

As to quaternary structure, part of a multimeric complex containing STXBP1 and STX1A. Interacts with STXBP1. Component of the brain-specific heterotrimeric complex (LIN-10-LIN-2-LIN-7 complex) composed of at least APBA1, CASK, and LIN7, which associates with the motor protein KIF17 to transport vesicles along microtubules. Within the complex, interacts (via PDZ domain) with the motor protein KIF17; the interaction is direct and is required for association of KIF17 with the cargo that is to be transported. Binds to the cytoplasmic domain of amyloid protein (APP). Interacts (via PDZ 1 and 2 domains) with FSPB. Isoform 2 interacts (via its truncated PID domain) with active, GTP-bound RAB6A and RAB6B. In terms of tissue distribution, brain. Detected in the cerebellum, hippocampus, olfactory system, piriform and entorhinal cortex, supraoptic nucleus of the hypothalamus, substantia nigra, and other mesencephalic areas.

The protein resides in the cytoplasm. Its subcellular location is the perinuclear region. The protein localises to the nucleus. It localises to the golgi apparatus. Putative function in synaptic vesicle exocytosis by binding to Munc18-1, an essential component of the synaptic vesicle exocytotic machinery. May modulate processing of the amyloid-beta precursor protein (APP) and hence formation of APP-beta. This chain is Amyloid-beta A4 precursor protein-binding family A member 1 (Apba1), found in Rattus norvegicus (Rat).